The sequence spans 293 residues: NAD kinase (293 aa).

The Proton acceptor role is filled by Asp72. Residues 72-73 (DG), 146-147 (ND), Arg157, Lys174, Asp176, 187-192 (TAYALS), and Gln247 contribute to the NAD(+) site.

It belongs to the NAD kinase family. Requires a divalent metal cation as cofactor.

It is found in the cytoplasm. The catalysed reaction is NAD(+) + ATP = ADP + NADP(+) + H(+). In terms of biological role, involved in the regulation of the intracellular balance of NAD and NADP, and is a key enzyme in the biosynthesis of NADP. Catalyzes specifically the phosphorylation on 2'-hydroxyl of the adenosine moiety of NAD to yield NADP. This Marinomonas sp. (strain MWYL1) protein is NAD kinase.